A 1440-amino-acid polypeptide reads, in one-letter code: Pentatricopeptide repeat-containing protein At3g18110, chloroplastic (1440 aa).

The transit peptide at 1–44 directs the protein to the chloroplast; it reads MAVSAGALAFPALSVRATLNPEIKDEQANISSTTSSSQKFTYSR. Positions 63 to 72 are enriched in polar residues; the sequence is TPSQTLSSPV. The segment at 63–84 is disordered; that stretch reads TPSQTLSSPVSPIAGTPDSGDV. PPR repeat units follow at residues 224 to 258, 259 to 295, 296 to 330, 331 to 365, 366 to 400, 401 to 431, 437 to 471, 472 to 506, 507 to 541, 542 to 572, 608 to 638, 643 to 678, 680 to 714, 715 to 749, 751 to 785, 786 to 820, 821 to 855, 856 to 890, 891 to 925, 926 to 960, 961 to 995, 996 to 1030, 1031 to 1065, 1066 to 1100, and 1101 to 1135; these read RVQVYNAMMGVYSRSGKFSKAQELVDAMRQRGCVP, DLISFNTLINARLKSGGLTPNLAVELLDMVRNSGLRP, DAITYNTLLSACSRDSNLDGAVKVFEDMEAHRCQP, DLWTYNAMISVYGRCGLAAEAERLFMELELKGFFP, DAVTYNSLLYAFARERNTEKVKEVYQQMQKMGFGK, DEMTYNTIIHMYGKQGQLDLALQLYKDMKGL, DAITYTVLIDSLGKANRTVEAAALMSEMLDVGIKP, TLQTYSALICGYAKAGKREEAEDTFSCMLRSGTKP, DNLAYSVMLDVLLRGNETRKAWGLYRDMISDGHTP, SYTLYELMILGLMKENRSDDIQKTIRDMEEL, ENDTLLSILGSYSSSGRHSEAFELLEFLKEH, KRLITEALIVLHCKVNNLSAALDEYFADPCVHGWCF, SSTMYETLLHCCVANEHYAEASQVFSDLRLSGCEA, SESVCKSMVVVYCKLGFPETAHQVVNQAETKGFHF, CSPMYTDIIEAYGKQKLWQKAESVVGNLRQSGRTP, DLKTWNSLMSAYAQCGCYERARAIFNTMMRDGPSP, TVESINILLHALCVDGRLEELYVVVEELQDMGFKI, SKSSILLMLDAFARAGNIFEVKKIYSSMKAAGYLP, TIRLYRMMIELLCKGKRVRDAEIMVSEMEEANFKV, ELAIWNSMLKMYTAIEDYKKTVQVYQRIKETGLEP, DETTYNTLIIMYCRDRRPEEGYLLMQQMRNLGLDP, KLDTYKSLISAFGKQKCLEQAEQLFEELLSKGLKL, DRSFYHTMMKISRDSGSDSKAEKLLQMMKNAGIEP, TLATMHLLMVSYSSSGNPQEAEKVLSNLKDTEVEL, and TTLPYSSVIDAYLRSKDYNSGIERLLEMKKEGLEP. The tract at residues 1419–1440 is disordered; sequence KKKKMGNETNGINTRRKFVRSK.

The protein belongs to the PPR family. P subfamily.

The protein localises to the plastid. It is found in the chloroplast. In terms of biological role, may play a role in embryogenesis. The polypeptide is Pentatricopeptide repeat-containing protein At3g18110, chloroplastic (EMB1270) (Arabidopsis thaliana (Mouse-ear cress)).